Consider the following 138-residue polypeptide: ATP synthase epsilon chain (138 aa).

Belongs to the ATPase epsilon chain family. F-type ATPases have 2 components, CF(1) - the catalytic core - and CF(0) - the membrane proton channel. CF(1) has five subunits: alpha(3), beta(3), gamma(1), delta(1), epsilon(1). CF(0) has three main subunits: a, b and c.

Its subcellular location is the cell membrane. In terms of biological role, produces ATP from ADP in the presence of a proton gradient across the membrane. The polypeptide is ATP synthase epsilon chain (Streptococcus pyogenes serotype M2 (strain MGAS10270)).